A 798-amino-acid polypeptide reads, in one-letter code: Bromodomain-containing protein 2 (798 aa).

Position 1 is an N-acetylmethionine (Met-1). The segment at 1 to 21 (MLQNVTPHKLPGEGNAGLLGL) is disordered. Thr-6 is subject to Phosphothreonine. Phosphoserine is present on Ser-36. Residues 53–72 (LQLAPANPPPPEVSNPKKPG) form a disordered region. The Bromo 1 domain occupies 73-179 (RVTNQLQYLH…KIFLQKVASM (107 aa)). Asp-111, Tyr-154, Asn-155, Lys-156, Asp-159, and Asp-160 together coordinate a protein. 3 disordered regions span residues 267–348 (PPAQ…LSEQ), 455–648 (EPLE…KRQL), and 735–798 (EKRL…SDSG). The span at 284-297 (TTTPTPTAILAPGS) shows a compositional bias: low complexity. Phosphoserine is present on residues Ser-297, Ser-300, and Ser-304. The span at 315-331 (MRRESGRPIKPPRKDLP) shows a compositional bias: basic and acidic residues. The region spanning 343-452 (GKLSEQLKHC…DVFEFRYAKM (110 aa)) is the Bromo 2 domain. Over residues 480 to 512 (SSEESSSESSSEEEEEEDEEDEEEESESSDSEE) the composition is skewed to acidic residues. The segment covering 542 to 564 (KPKRKREKKEKKKKRKAEKHRGR) has biased composition (basic residues). Residues 553–557 (KKKRK) carry the Nuclear localization signal motif. Residues 630 to 712 (DSEEEEESRP…SCLRKKPRKP (83 aa)) enclose the NET domain. Ser-631 is subject to Phosphoserine. Basic and acidic residues predominate over residues 637 to 648 (SRPMSYDEKRQL). The segment covering 772-792 (SASSSSSDSSSSSSSSSSSDT) has biased composition (low complexity).

It belongs to the BET family. As to quaternary structure, homodimer. Interacts with E2F1. Interacts with (acetylated) STAT3; promoting STAT3 recruitment to chromatin. Interacts with CTCF; promoting BRD2 recruitment to chromatin.

Its subcellular location is the nucleus. The protein resides in the chromosome. Chromatin reader protein that specifically recognizes and binds histone H4 acetylated at 'Lys-5' and 'Lys-12' (H4K5ac and H4K12ac, respectively), thereby controlling gene expression and remodeling chromatin structures. Recruits transcription factors and coactivators to target gene sites, and activates RNA polymerase II machinery for transcriptional elongation. Plays a key role in genome compartmentalization via its association with CTCF and cohesin: recruited to chromatin by CTCF and promotes formation of topologically associating domains (TADs) via its ability to bind acetylated histones, contributing to CTCF boundary formation and enhancer insulation. Also recognizes and binds acetylated non-histone proteins, such as STAT3. Involved in inflammatory response by regulating differentiation of naive CD4(+) T-cells into T-helper Th17: recognizes and binds STAT3 acetylated at 'Lys-87', promoting STAT3 recruitment to chromatin. In addition to acetylated lysines, also recognizes and binds lysine residues on histones that are both methylated and acetylated on the same side chain to form N6-acetyl-N6-methyllysine (Kacme), an epigenetic mark of active chromatin associated with increased transcriptional initiation. Specifically binds histone H4 acetyl-methylated at 'Lys-5' and 'Lys-12' (H4K5acme and H4K12acme, respectively). In Rattus norvegicus (Rat), this protein is Bromodomain-containing protein 2 (Brd2).